The chain runs to 620 residues: MFKLFTARQHDKIWDFDGGIHPPEMKLQSSTVPMRIAPLPDQLIIPLQQHLGPEGELRVRAGEQVLKGQPLTVGRGRTVPVHAPTSGMITAIAPHTTAHPSGLAELCVHITPDGEDRWREQQPWADYRQRDKMALLDRIHQAGIAGLGGAGFPTASKLQGGLNGIITLIINAAECEPYITADDRLMQEHADEVITGIHILRHLLQPQQVLIGIEDNKPEAIAALQRALRGQDDIHLRVVPTKYPSGGAKQLTKILTGKEVPFGKHSSSIGVLMQNVGTVVAIKRAVIDDEPLIERVVTLTGDALSSPGNFWARIGTPVLYLLKLAGFKPQNPPMVIMGGPLMGFTLPSLDVPIVKISNCILAPAETEMGLSEPEQSCIRCGLCVDACPAGLLPQQLYWFSRGEEHEKARNHNLFDCIECGACAYVCPSNIPLVQYYRQEKAEIRALDQESARAAEAKARFEAKQARLAREKLARELRHKQAAVKLTDADQQTVDAAVSRLTRQSDGSESVINIPAGQMPDNSAVIAAREARKAQARARQAEKQQARSTEETTDVVDPRQAAVAAAIARVKAKKAVQAQHVTTDVAEAGSEAMAEDPRKAAVAAAIARVKAKKAAQAINPD.

4Fe-4S ferredoxin-type domains lie at 366–397 and 407–436; these read TEMGLSEPEQSCIRCGLCVDACPAGLLPQQLY and KARNHNLFDCIECGACAYVCPSNIPLVQYY. [4Fe-4S] cluster-binding residues include C377, C380, C383, C387, C416, C419, C422, and C426.

It belongs to the 4Fe4S bacterial-type ferredoxin family. RnfC subfamily. In terms of assembly, the complex is composed of six subunits: RnfA, RnfB, RnfC, RnfD, RnfE and RnfG. [4Fe-4S] cluster is required as a cofactor.

The protein localises to the cell inner membrane. Its function is as follows. Part of a membrane-bound complex that couples electron transfer with translocation of ions across the membrane. The chain is Ion-translocating oxidoreductase complex subunit C from Yersinia pestis bv. Antiqua (strain Antiqua).